The primary structure comprises 451 residues: UDP-N-acetylmuramate--L-alanine ligase (451 aa).

110–116 (GTHGKTT) contributes to the ATP binding site.

This sequence belongs to the MurCDEF family.

The protein localises to the cytoplasm. The catalysed reaction is UDP-N-acetyl-alpha-D-muramate + L-alanine + ATP = UDP-N-acetyl-alpha-D-muramoyl-L-alanine + ADP + phosphate + H(+). The protein operates within cell wall biogenesis; peptidoglycan biosynthesis. Functionally, cell wall formation. This chain is UDP-N-acetylmuramate--L-alanine ligase, found in Francisella tularensis subsp. novicida (strain U112).